We begin with the raw amino-acid sequence, 308 residues long: D-2-hydroxyacid dehydrogenase (308 aa).

Residues 145-146 (TL), 224-226 (VAR), and Asp-250 contribute to the NAD(+) site. Arg-226 is a catalytic residue. Glu-255 is an active-site residue. His-274 serves as the catalytic Proton donor. An NAD(+)-binding site is contributed by 274 to 277 (HVSA).

The protein belongs to the D-isomer specific 2-hydroxyacid dehydrogenase family. As to quaternary structure, homotetramer.

Functionally, catalyzes the stereospecific NAD(P)H-dependent reduction of 2-ketocarboxylic acids into the corresponding D-2-hydroxycarboxylic acids. Can use both NADPH or NADH as reductant, displaying a marked preference for NADPH over NADH. Shows a broad substrate specificity, although it displays a marked preference for the 2-ketocarboxylic acids having an unbranched chain of 4-5 carbon atoms. The polypeptide is D-2-hydroxyacid dehydrogenase (ddh) (Haloferax mediterranei (strain ATCC 33500 / DSM 1411 / JCM 8866 / NBRC 14739 / NCIMB 2177 / R-4) (Halobacterium mediterranei)).